Here is a 37-residue protein sequence, read N- to C-terminus: Mu-agatoxin-Aa1e (37 aa).

4 disulfide bridges follow: C2-C18, C9-C23, C17-C33, and C25-C31. N37 carries the asparagine amide modification.

It belongs to the neurotoxin 07 (Beta/delta-agtx) family. 03 (aga-4) subfamily. Aga sub-subfamily. Expressed by the venom gland.

Its subcellular location is the secreted. Its function is as follows. Insecticidal neurotoxin that induces an irreversible spastic paralysis when injected into insects. Modifies presynaptic voltage-gated sodium channels (Nav), causing them to open at the normal resting potential of the nerve. This leads to spontaneous release of neurotransmitter and repetitive action potentials in motor neurons. This is Mu-agatoxin-Aa1e from Agelenopsis aperta (North American funnel-web spider).